We begin with the raw amino-acid sequence, 369 residues long: Delta(6)-protoilludene synthase STEHIDRAFT_73029 (369 aa).

Residues aspartate 107, asparagine 243, serine 247, and glutamate 251 each contribute to the Mg(2+) site. The short motif at aspartate 107–aspartate 111 is the D(D/E)XX(D/E) motif element. The NSE motif motif lies at asparagine 243–glutamate 251. Arginine 333 and tyrosine 334 together coordinate (2E,6E)-farnesyl diphosphate.

It belongs to the terpene synthase family. The cofactor is Mg(2+). It depends on Mn(2+) as a cofactor. Ca(2+) serves as cofactor. Requires Ni(2+) as cofactor. Co(2+) is required as a cofactor.

It carries out the reaction (2E,6E)-farnesyl diphosphate = Delta(6)-protoilludene + diphosphate. It catalyses the reaction (2E,6E)-farnesyl diphosphate = alpha-selinene + diphosphate. With respect to regulation, ca(2+) switches the cyclization mechanism of delta(6)-protoilludene synthase from 1,11 to 1,10 cyclization which leads to the production of beta-elemene. Functionally, terpene cyclase that catalyzes the cyclization of farnesyl diphosphate (FPP) to delta(6)-protoilludene. In presence of Ca(2+), a significant switch from 1,11 to a dual 1,11/1,10 cyclization occurs, producing beta-elemene as the major product, with lower levels of delta(6)-protoilludene and (E)-beta-caryophyllene, and traces of beta-selinene and alpha-selinene. The protein is Delta(6)-protoilludene synthase STEHIDRAFT_73029 of Stereum hirsutum (strain FP-91666) (White-rot fungus).